The primary structure comprises 451 residues: NADP-specific glutamate dehydrogenase (451 aa).

The active site involves Lys114.

This sequence belongs to the Glu/Leu/Phe/Val dehydrogenases family. As to quaternary structure, homohexamer.

It carries out the reaction L-glutamate + NADP(+) + H2O = 2-oxoglutarate + NH4(+) + NADPH + H(+). In Fusarium fujikuroi (Bakanae and foot rot disease fungus), this protein is NADP-specific glutamate dehydrogenase (GDH2).